A 262-amino-acid polypeptide reads, in one-letter code: 3-deoxy-manno-octulosonate cytidylyltransferase (262 aa).

The protein belongs to the KdsB family.

Its subcellular location is the cytoplasm. It catalyses the reaction 3-deoxy-alpha-D-manno-oct-2-ulosonate + CTP = CMP-3-deoxy-beta-D-manno-octulosonate + diphosphate. The protein operates within nucleotide-sugar biosynthesis; CMP-3-deoxy-D-manno-octulosonate biosynthesis; CMP-3-deoxy-D-manno-octulosonate from 3-deoxy-D-manno-octulosonate and CTP: step 1/1. It participates in bacterial outer membrane biogenesis; lipopolysaccharide biosynthesis. Its function is as follows. Activates KDO (a required 8-carbon sugar) for incorporation into bacterial lipopolysaccharide in Gram-negative bacteria. This Blochmanniella pennsylvanica (strain BPEN) protein is 3-deoxy-manno-octulosonate cytidylyltransferase.